The primary structure comprises 111 residues: Cytochrome c (111 aa).

Serine 1 is modified (N-acetylserine). Heme c contacts are provided by cysteine 22, cysteine 25, and histidine 26. The residue at position 80 (lysine 80) is an N6,N6,N6-trimethyllysine. Methionine 88 contributes to the heme c binding site.

The protein belongs to the cytochrome c family. In terms of processing, binds 1 heme c group covalently per subunit.

It localises to the mitochondrion intermembrane space. In terms of biological role, electron carrier protein. The oxidized form of the cytochrome c heme group can accept an electron from the heme group of the cytochrome c1 subunit of cytochrome reductase. Cytochrome c then transfers this electron to the cytochrome oxidase complex, the final protein carrier in the mitochondrial electron-transport chain. The polypeptide is Cytochrome c (Ulva intestinalis (Hollow green nori)).